We begin with the raw amino-acid sequence, 361 residues long: Phenylalanine--tRNA ligase alpha subunit (361 aa).

Glutamate 260 is a binding site for Mg(2+).

It belongs to the class-II aminoacyl-tRNA synthetase family. Phe-tRNA synthetase alpha subunit type 1 subfamily. Tetramer of two alpha and two beta subunits. It depends on Mg(2+) as a cofactor.

Its subcellular location is the cytoplasm. It carries out the reaction tRNA(Phe) + L-phenylalanine + ATP = L-phenylalanyl-tRNA(Phe) + AMP + diphosphate + H(+). This Allorhizobium ampelinum (strain ATCC BAA-846 / DSM 112012 / S4) (Agrobacterium vitis (strain S4)) protein is Phenylalanine--tRNA ligase alpha subunit.